Consider the following 77-residue polypeptide: Integrin beta-2 (77 aa).

Cysteine 36 and cysteine 43 are joined by a disulfide. Residue asparagine 54 is glycosylated (N-linked (GlcNAc...) asparagine).

Belongs to the integrin beta chain family. In terms of assembly, dimer of an alpha and beta subunit.

The protein resides in the membrane. Integrins are a large family of cell surface glycoproteins that mediate cell to cell and cell to matrix adhesion. The polypeptide is Integrin beta-2 (itgb2) (Xenopus laevis (African clawed frog)).